Consider the following 269-residue polypeptide: Shikimate dehydrogenase (NADP(+)) (269 aa).

Residues 22-24 (TLS) and T68 each bind shikimate. Catalysis depends on K72, which acts as the Proton acceptor. 2 residues coordinate shikimate: N93 and D104. NADP(+) is bound by residues 128-132 (GAGGA), 152-157 (NRTNLR), and F210. Residue Y212 coordinates shikimate. Position 233 (G233) interacts with NADP(+).

It belongs to the shikimate dehydrogenase family. In terms of assembly, homodimer.

The catalysed reaction is shikimate + NADP(+) = 3-dehydroshikimate + NADPH + H(+). It participates in metabolic intermediate biosynthesis; chorismate biosynthesis; chorismate from D-erythrose 4-phosphate and phosphoenolpyruvate: step 4/7. Its function is as follows. Involved in the biosynthesis of the chorismate, which leads to the biosynthesis of aromatic amino acids. Catalyzes the reversible NADPH linked reduction of 3-dehydroshikimate (DHSA) to yield shikimate (SA). The polypeptide is Shikimate dehydrogenase (NADP(+)) (Saccharolobus islandicus (strain L.S.2.15 / Lassen #1) (Sulfolobus islandicus)).